Reading from the N-terminus, the 170-residue chain is Ubiquitin-conjugating enzyme E2 J2-like (170 aa).

In terms of domain architecture, UBC core spans 15 to 165 (DCITRLKREF…NKTFCELFPY (151 aa)). Residue C97 is the Glycyl thioester intermediate of the active site.

The protein belongs to the ubiquitin-conjugating enzyme family.

The catalysed reaction is S-ubiquitinyl-[E1 ubiquitin-activating enzyme]-L-cysteine + [E2 ubiquitin-conjugating enzyme]-L-cysteine = [E1 ubiquitin-activating enzyme]-L-cysteine + S-ubiquitinyl-[E2 ubiquitin-conjugating enzyme]-L-cysteine.. It participates in protein modification; protein ubiquitination. Its function is as follows. Catalyzes the covalent attachment of ubiquitin to other proteins. The protein is Ubiquitin-conjugating enzyme E2 J2-like of Dictyostelium discoideum (Social amoeba).